Reading from the N-terminus, the 498-residue chain is ATP synthase subunit alpha 1 (498 aa).

The protein belongs to the ATPase alpha/beta chains family. In terms of assembly, F-type ATPases have 2 components, CF(1) - the catalytic core - and CF(0) - the membrane proton channel. CF(1) has five subunits: alpha(3), beta(3), gamma(1), delta(1), epsilon(1). CF(0) has three main subunits: a(1), b(2) and c(9-12). The alpha and beta chains form an alternating ring which encloses part of the gamma chain. CF(1) is attached to CF(0) by a central stalk formed by the gamma and epsilon chains, while a peripheral stalk is formed by the delta and b chains.

The protein localises to the cell membrane. The catalysed reaction is ATP + H2O + 4 H(+)(in) = ADP + phosphate + 5 H(+)(out). Functionally, produces ATP from ADP in the presence of a proton gradient across the membrane. The alpha chain is a regulatory subunit. The chain is ATP synthase subunit alpha 1 from Listeria monocytogenes serovar 1/2a (strain ATCC BAA-679 / EGD-e).